Consider the following 145-residue polypeptide: Superoxide dismutase [Mn/Fe] (145 aa).

The Fe(3+) site is built by H10 and H64. Mn(2+) contacts are provided by H10 and H64.

The protein belongs to the iron/manganese superoxide dismutase family. Mn(2+) is required as a cofactor. The cofactor is Fe(3+).

It carries out the reaction 2 superoxide + 2 H(+) = H2O2 + O2. Functionally, destroys superoxide anion radicals which are normally produced within the cells and which are toxic to biological systems. Catalyzes the dismutation of superoxide anion radicals into O2 and H2O2 by successive reduction and oxidation of the transition metal ion at the active site. The polypeptide is Superoxide dismutase [Mn/Fe] (sodA) (Streptococcus porcinus).